The primary structure comprises 187 residues: Crossover junction endodeoxyribonuclease RuvC (187 aa).

Catalysis depends on residues Asp-7, Glu-67, and Asp-140. Asp-7, Glu-67, and Asp-140 together coordinate Mg(2+).

Belongs to the RuvC family. In terms of assembly, homodimer which binds Holliday junction (HJ) DNA. The HJ becomes 2-fold symmetrical on binding to RuvC with unstacked arms; it has a different conformation from HJ DNA in complex with RuvA. In the full resolvosome a probable DNA-RuvA(4)-RuvB(12)-RuvC(2) complex forms which resolves the HJ. Mg(2+) is required as a cofactor.

The protein localises to the cytoplasm. The enzyme catalyses Endonucleolytic cleavage at a junction such as a reciprocal single-stranded crossover between two homologous DNA duplexes (Holliday junction).. Its function is as follows. The RuvA-RuvB-RuvC complex processes Holliday junction (HJ) DNA during genetic recombination and DNA repair. Endonuclease that resolves HJ intermediates. Cleaves cruciform DNA by making single-stranded nicks across the HJ at symmetrical positions within the homologous arms, yielding a 5'-phosphate and a 3'-hydroxyl group; requires a central core of homology in the junction. The consensus cleavage sequence is 5'-(A/T)TT(C/G)-3'. Cleavage occurs on the 3'-side of the TT dinucleotide at the point of strand exchange. HJ branch migration catalyzed by RuvA-RuvB allows RuvC to scan DNA until it finds its consensus sequence, where it cleaves and resolves the cruciform DNA. In Prosthecochloris aestuarii (strain DSM 271 / SK 413), this protein is Crossover junction endodeoxyribonuclease RuvC.